Here is a 536-residue protein sequence, read N- to C-terminus: Probable tyrosyl-DNA phosphodiesterase (536 aa).

The Nucleophile role is filled by His122. Residue Lys124 participates in substrate binding. The tract at residues 315-318 is interaction with DNA; it reads SMGS. The Proton donor/acceptor role is filled by His401. Lys403 is a substrate binding site.

This sequence belongs to the tyrosyl-DNA phosphodiesterase family.

It is found in the nucleus. Functionally, DNA repair enzyme that can remove a variety of covalent adducts from DNA through hydrolysis of a 3'-phosphodiester bond, giving rise to DNA with a free 3' phosphate. Catalyzes the hydrolysis of dead-end complexes between DNA and the topoisomerase I active site tyrosine residue. Hydrolyzes 3'-phosphoglycolates on protruding 3' ends on DNA double-strand breaks due to DNA damage by radiation and free radicals. Acts on blunt-ended double-strand DNA breaks and on single-stranded DNA. May have low 3'exonuclease activity and may be able to remove a single nucleoside from the 3'end of DNA and RNA molecules with 3'hydroxyl groups. Has no exonuclease activity towards DNA or RNA with a 3'phosphate. The protein is Probable tyrosyl-DNA phosphodiesterase of Schizosaccharomyces pombe (strain 972 / ATCC 24843) (Fission yeast).